Here is a 324-residue protein sequence, read N- to C-terminus: Beta-ketoacyl-[acyl-carrier-protein] synthase III (324 aa).

Residues cysteine 112 and histidine 249 contribute to the active site. The interval 250–254 is ACP-binding; it reads QANRR. Asparagine 279 is an active-site residue.

It belongs to the thiolase-like superfamily. FabH family. Homodimer.

It localises to the cytoplasm. It catalyses the reaction malonyl-[ACP] + acetyl-CoA + H(+) = 3-oxobutanoyl-[ACP] + CO2 + CoA. It functions in the pathway lipid metabolism; fatty acid biosynthesis. Functionally, catalyzes the condensation reaction of fatty acid synthesis by the addition to an acyl acceptor of two carbons from malonyl-ACP. Catalyzes the first condensation reaction which initiates fatty acid synthesis and may therefore play a role in governing the total rate of fatty acid production. Possesses both acetoacetyl-ACP synthase and acetyl transacylase activities. Its substrate specificity determines the biosynthesis of branched-chain and/or straight-chain of fatty acids. This is Beta-ketoacyl-[acyl-carrier-protein] synthase III from Streptococcus pyogenes serotype M2 (strain MGAS10270).